The sequence spans 101 residues: Small ribosomal subunit protein uS10 (101 aa).

It belongs to the universal ribosomal protein uS10 family. In terms of assembly, part of the 30S ribosomal subunit.

Its function is as follows. Involved in the binding of tRNA to the ribosomes. The protein is Small ribosomal subunit protein uS10 of Mycobacterium ulcerans (strain Agy99).